Consider the following 339-residue polypeptide: Putative ABC transporter ATP-binding protein MG467 homolog (339 aa).

A disordered region spans residues 41-87 (KKTKKAKPAKVKKVKEPKAKAVKPEQVKPTKTTKAPKPKKPKKQGGL). A compositionally biased stretch (basic residues) spans 42–53 (KTKKAKPAKVKK). A compositionally biased stretch (basic and acidic residues) spans 54 to 68 (VKEPKAKAVKPEQVK). Over residues 74–83 (KAPKPKKPKK) the composition is skewed to basic residues. The region spanning 112–338 (ISIDKMWKHV…IVSNELVRPL (227 aa)) is the ABC transporter domain. 150 to 157 (GPSGSGKT) serves as a coordination point for ATP.

Belongs to the ABC transporter superfamily.

In Mycoplasma pneumoniae (strain ATCC 29342 / M129 / Subtype 1) (Mycoplasmoides pneumoniae), this protein is Putative ABC transporter ATP-binding protein MG467 homolog.